The sequence spans 496 residues: Glutamyl-tRNA(Gln) amidotransferase subunit A (496 aa).

Active-site charge relay system residues include K79 and S159. S183 functions as the Acyl-ester intermediate in the catalytic mechanism.

Belongs to the amidase family. GatA subfamily. As to quaternary structure, heterotrimer of A, B and C subunits.

It catalyses the reaction L-glutamyl-tRNA(Gln) + L-glutamine + ATP + H2O = L-glutaminyl-tRNA(Gln) + L-glutamate + ADP + phosphate + H(+). Functionally, allows the formation of correctly charged Gln-tRNA(Gln) through the transamidation of misacylated Glu-tRNA(Gln) in organisms which lack glutaminyl-tRNA synthetase. The reaction takes place in the presence of glutamine and ATP through an activated gamma-phospho-Glu-tRNA(Gln). This Ruegeria pomeroyi (strain ATCC 700808 / DSM 15171 / DSS-3) (Silicibacter pomeroyi) protein is Glutamyl-tRNA(Gln) amidotransferase subunit A.